We begin with the raw amino-acid sequence, 1598 residues long: Transposon Ty2-LR2 Gag-Pol polyprotein (1598 aa).

Composition is skewed to polar residues over residues 1–11 (MESQQLHQNPH), 19–39 (ASVT…SASN), and 49–60 (KVNSQEETTPGT). Disordered stretches follow at residues 1–88 (MESQ…YQQH) and 359–449 (QHSE…SNDE). The RNA-binding stretch occupies residues 295–397 (ENNINVSDRL…SSKPRAAKAH (103 aa)). The segment covering 369–381 (TSPNTTNTKVTTR) has biased composition (low complexity). Composition is skewed to polar residues over residues 399 to 408 (IATSSKFSRV) and 415 to 435 (ESTV…GQQQ). Aspartate 457 serves as the catalytic For protease activity; shared with dimeric partner. The tract at residues 579–636 (NVNKSKSVNKYPYPLIHRMLGHANFRSIQKSLKKNAVTYLKESDIEWSNASTYQCPDC) is integrase-type zinc finger-like. Positions 656-831 (ESYEPFQYLH…AGLDITTILP (176 aa)) constitute an Integrase catalytic domain. Mg(2+)-binding residues include aspartate 667 and aspartate 732. 3 stretches are compositionally biased toward polar residues: residues 915–927 (SFIE…QSYD), 1009–1034 (ESDT…STNE), and 1065–1082 (QRNS…STPS). Disordered regions lie at residues 915–934 (SFIE…ESDH), 1004–1034 (MGGT…STNE), 1059–1135 (TEEP…KSSK), 1146–1165 (LPLP…VSKD), and 1170–1205 (HSRQ…TEIE). Residues 1151 to 1165 (LTHKSPTDTSDVSKD) are compositionally biased toward basic and acidic residues. Residues 1193–1227 (KKRSLEDNETEIEVSRDTWNNKNMRSLEPPRSKKR) carry the Bipartite nuclear localization signal motif. Positions 1353 to 1491 (NDYYITQLDI…DILGLEIKYQ (139 aa)) constitute a Reverse transcriptase Ty1/copia-type domain. Aspartate 1361, aspartate 1442, and aspartate 1443 together coordinate Mg(2+).

As to quaternary structure, the capsid protein forms a homotrimer, from which the VLPs are assembled. The protease is a homodimer, whose active site consists of two apposed aspartic acid residues. In terms of processing, initially, virus-like particles (VLPs) are composed of the structural unprocessed proteins Gag and Gag-Pol, and also contain the host initiator methionine tRNA (tRNA(i)-Met) which serves as a primer for minus-strand DNA synthesis, and a dimer of genomic Ty RNA. Processing of the polyproteins occurs within the particle and proceeds by an ordered pathway, called maturation. First, the protease (PR) is released by autocatalytic cleavage of the Gag-Pol polyprotein, and this cleavage is a prerequisite for subsequent processing at the remaining sites to release the mature structural and catalytic proteins. Maturation takes place prior to the RT reaction and is required to produce transposition-competent VLPs.

The protein resides in the cytoplasm. It localises to the nucleus. The catalysed reaction is DNA(n) + a 2'-deoxyribonucleoside 5'-triphosphate = DNA(n+1) + diphosphate. The enzyme catalyses Endonucleolytic cleavage to 5'-phosphomonoester.. Its function is as follows. Capsid protein (CA) is the structural component of the virus-like particle (VLP), forming the shell that encapsulates the retrotransposons dimeric RNA genome. The particles are assembled from trimer-clustered units and there are holes in the capsid shells that allow for the diffusion of macromolecules. CA also has nucleocapsid-like chaperone activity, promoting primer tRNA(i)-Met annealing to the multipartite primer-binding site (PBS), dimerization of Ty2 RNA and initiation of reverse transcription. The aspartyl protease (PR) mediates the proteolytic cleavages of the Gag and Gag-Pol polyproteins after assembly of the VLP. Functionally, reverse transcriptase/ribonuclease H (RT) is a multifunctional enzyme that catalyzes the conversion of the retro-elements RNA genome into dsDNA within the VLP. The enzyme displays a DNA polymerase activity that can copy either DNA or RNA templates, and a ribonuclease H (RNase H) activity that cleaves the RNA strand of RNA-DNA heteroduplexes during plus-strand synthesis and hydrolyzes RNA primers. The conversion leads to a linear dsDNA copy of the retrotransposon that includes long terminal repeats (LTRs) at both ends. In terms of biological role, integrase (IN) targets the VLP to the nucleus, where a subparticle preintegration complex (PIC) containing at least integrase and the newly synthesized dsDNA copy of the retrotransposon must transit the nuclear membrane. Once in the nucleus, integrase performs the integration of the dsDNA into the host genome. This Saccharomyces cerevisiae (strain ATCC 204508 / S288c) (Baker's yeast) protein is Transposon Ty2-LR2 Gag-Pol polyprotein (TY2B-LR2).